The following is a 286-amino-acid chain: Cysteine-rich repeat secretory protein 57 (286 aa).

Positions methionine 1–alanine 20 are cleaved as a signal peptide. Residues isoleucine 21 to arginine 265 lie on the Extracellular side of the membrane. 2 Gnk2-homologous domains span residues histidine 29–phenylalanine 131 and threonine 137–serine 247. 10 N-linked (GlcNAc...) asparagine glycosylation sites follow: asparagine 35, asparagine 40, asparagine 44, asparagine 60, asparagine 69, asparagine 90, asparagine 100, asparagine 108, asparagine 209, and asparagine 246. Residues glycine 266 to leucine 284 form a helical membrane-spanning segment. At glycine 285–leucine 286 the chain is on the cytoplasmic side.

This sequence belongs to the cysteine-rich repeat secretory protein family.

The protein localises to the membrane. The polypeptide is Cysteine-rich repeat secretory protein 57 (CRRSP57) (Arabidopsis thaliana (Mouse-ear cress)).